The primary structure comprises 118 residues: Holin-like protein CidA 2 (118 aa).

A run of 4 helical transmembrane segments spans residues 5-27, 31-50, 62-84, and 88-110; these read MLLL…QGVF, MPGS…TRIL, LLVF…ESFL, and GSII…GYIS.

Belongs to the CidA/LrgA family. CidA subfamily.

The protein localises to the cell membrane. Functionally, increases the activity of extracellular murein hydrolases possibly by mediating their export via hole formation. Inhibited by the antiholin-like proteins LrgAB. In an unstressed cell, the LrgAB products probably inhibit the function of the CidA protein. When a cell is stressed by the addition of antibiotics or by other factors in the environment, CidA possibly oligomerizes within the bacterial cell membrane, creating lesions that disrupt the proton motive force, which in turn results in loss of cell viability. These lesions are also hypothesized to regulate the subsequent cell lysis by either allowing the murein hydrolases access to the cell wall substrate and/or regulating their activity by a possible change in the cell wall pH that results from loss of membrane potential. The protein is Holin-like protein CidA 2 (cidA2) of Bacillus anthracis.